The sequence spans 394 residues: Imidazolonepropionase (394 aa).

Fe(3+)-binding residues include H61 and H63. Zn(2+) contacts are provided by H61 and H63. R70, Y133, and H164 together coordinate 4-imidazolone-5-propanoate. An N-formimidoyl-L-glutamate-binding site is contributed by Y133. H225 contacts Fe(3+). H225 serves as a coordination point for Zn(2+). E228 lines the 4-imidazolone-5-propanoate pocket. Residue D299 coordinates Fe(3+). A Zn(2+)-binding site is contributed by D299.

It belongs to the metallo-dependent hydrolases superfamily. HutI family. Zn(2+) is required as a cofactor. Requires Fe(3+) as cofactor.

The protein localises to the cytoplasm. It carries out the reaction 4-imidazolone-5-propanoate + H2O = N-formimidoyl-L-glutamate. The protein operates within amino-acid degradation; L-histidine degradation into L-glutamate; N-formimidoyl-L-glutamate from L-histidine: step 3/3. Functionally, catalyzes the hydrolytic cleavage of the carbon-nitrogen bond in imidazolone-5-propanoate to yield N-formimidoyl-L-glutamate. It is the third step in the universal histidine degradation pathway. The sequence is that of Imidazolonepropionase from Picrophilus torridus (strain ATCC 700027 / DSM 9790 / JCM 10055 / NBRC 100828 / KAW 2/3).